A 348-amino-acid polypeptide reads, in one-letter code: Dihydroorotase (348 aa).

Zn(2+) contacts are provided by histidine 17 and histidine 19. Residues 19–21 (HLR) and asparagine 45 each bind substrate. Zn(2+) contacts are provided by lysine 103, histidine 140, and histidine 178. Position 103 is an N6-carboxylysine (lysine 103). Histidine 140 lines the substrate pocket. Leucine 223 contributes to the substrate binding site. Residue aspartate 251 coordinates Zn(2+). Aspartate 251 is an active-site residue. Substrate is bound by residues histidine 255 and alanine 267.

It belongs to the metallo-dependent hydrolases superfamily. DHOase family. Class II DHOase subfamily. As to quaternary structure, homodimer. The cofactor is Zn(2+).

The enzyme catalyses (S)-dihydroorotate + H2O = N-carbamoyl-L-aspartate + H(+). It functions in the pathway pyrimidine metabolism; UMP biosynthesis via de novo pathway; (S)-dihydroorotate from bicarbonate: step 3/3. Its function is as follows. Catalyzes the reversible cyclization of carbamoyl aspartate to dihydroorotate. In Escherichia coli O6:K15:H31 (strain 536 / UPEC), this protein is Dihydroorotase.